A 225-amino-acid chain; its full sequence is Transcriptional activator protein BglJ (225 aa).

The 66-residue stretch at 146–211 (YINQSRTLSP…GLLEAADILL (66 aa)) folds into the HTH luxR-type domain. The segment at residues 170-189 (MTQIAEQLKRNIKTIRAHKF) is a DNA-binding region (H-T-H motif).

In terms of assembly, forms a complex with RcsB; genetically both BglJ and RcsB are required to relieve bgl operon repression by H-NS and by StpA.

A crytic transcriptional activator. When its expression is induced it relieves H-NS repression of the bgl operon. Acts independently of transcription factor LeuO. This chain is Transcriptional activator protein BglJ (bglJ), found in Escherichia coli (strain K12).